A 340-amino-acid polypeptide reads, in one-letter code: Glyceraldehyde-3-phosphate dehydrogenase, cytosolic (340 aa).

Residues 16–17, D38, and R85 each bind NAD(+); that span reads RI. D-glyceraldehyde 3-phosphate contacts are provided by residues 156–158, T187, 216–217, and R239; these read SCT and TG. C157 serves as the catalytic Nucleophile. An NAD(+)-binding site is contributed by N321.

The protein belongs to the glyceraldehyde-3-phosphate dehydrogenase family. Homotetramer.

It is found in the cytoplasm. The enzyme catalyses D-glyceraldehyde 3-phosphate + phosphate + NAD(+) = (2R)-3-phospho-glyceroyl phosphate + NADH + H(+). It participates in carbohydrate degradation; glycolysis; pyruvate from D-glyceraldehyde 3-phosphate: step 1/5. Key enzyme in glycolysis that catalyzes the first step of the pathway by converting D-glyceraldehyde 3-phosphate (G3P) into 3-phospho-D-glyceroyl phosphate. Essential for the maintenance of cellular ATP levels and carbohydrate metabolism. The protein is Glyceraldehyde-3-phosphate dehydrogenase, cytosolic of Ginkgo biloba (Ginkgo).